We begin with the raw amino-acid sequence, 148 residues long: Large ribosomal subunit protein bL9 (148 aa).

This sequence belongs to the bacterial ribosomal protein bL9 family.

In terms of biological role, binds to the 23S rRNA. This chain is Large ribosomal subunit protein bL9, found in Syntrophotalea carbinolica (strain DSM 2380 / NBRC 103641 / GraBd1) (Pelobacter carbinolicus).